The chain runs to 450 residues: Ribosomal protein uS12 methylthiotransferase RimO (450 aa).

The region spanning 10–125 (SRIALVSLGC…VVDIVRRAAT (116 aa)) is the MTTase N-terminal domain. Residues cysteine 19, cysteine 54, cysteine 88, cysteine 162, cysteine 166, and cysteine 169 each coordinate [4Fe-4S] cluster. Positions 148–378 (SGSPFTAYLK…AAVQREVSRA (231 aa)) constitute a Radical SAM core domain. Residues 381-447 (RARVGSEVTV…PYDLRARVLS (67 aa)) enclose the TRAM domain.

Belongs to the methylthiotransferase family. RimO subfamily. [4Fe-4S] cluster is required as a cofactor.

The protein localises to the cytoplasm. The enzyme catalyses L-aspartate(89)-[ribosomal protein uS12]-hydrogen + (sulfur carrier)-SH + AH2 + 2 S-adenosyl-L-methionine = 3-methylsulfanyl-L-aspartate(89)-[ribosomal protein uS12]-hydrogen + (sulfur carrier)-H + 5'-deoxyadenosine + L-methionine + A + S-adenosyl-L-homocysteine + 2 H(+). In terms of biological role, catalyzes the methylthiolation of an aspartic acid residue of ribosomal protein uS12. The sequence is that of Ribosomal protein uS12 methylthiotransferase RimO from Desulforudis audaxviator (strain MP104C).